We begin with the raw amino-acid sequence, 86 residues long: Putative protein adenylyltransferase MJ1215 (86 aa).

The GSX(10)DXD motif motif lies at Gly-35–Asp-49. Mg(2+) contacts are provided by Asp-47, Asp-49, and Asp-79.

The protein belongs to the MntA antitoxin family. Probably forms a complex with cognate toxin MJ1216. Mg(2+) serves as cofactor.

It carries out the reaction L-tyrosyl-[protein] + ATP = O-(5'-adenylyl)-L-tyrosyl-[protein] + diphosphate. It catalyses the reaction O-(5'-adenylyl)-L-tyrosyl-[protein] + ATP = O-[5'-(adenylyl-(5'-&gt;3')-adenylyl)]-L-tyrosyl-[protein] + diphosphate. In terms of biological role, probable antitoxin component of a putative type VII toxin-antitoxin (TA) system. Neutralizes cognate toxic MJ1216 by di-AMPylation. In Methanocaldococcus jannaschii (strain ATCC 43067 / DSM 2661 / JAL-1 / JCM 10045 / NBRC 100440) (Methanococcus jannaschii), this protein is Putative protein adenylyltransferase MJ1215.